A 925-amino-acid chain; its full sequence is MPHKIGFVVVSSSGHEDGFSARELMIHAPTVSGWRSPRFCQFPQEIVLQMVERCRIRKLQLLAHQYMISSKIEFYISESLPEYFAPYQAERFRRLGYVSLCDNEKTGCKARELKSVYVDAVGQFLKLIFHQNHVNKYNIYNQVALVAINIIGDPADFSDESNTASREKLIDHYLGHNSEDPALEGTYARKSDYISPLDDLAFDMYQDPEVAQIIRKLDERKREAVQKERYDYAKKLKQAIADLQKVGERLGRYEVEKRCAVEKEDYDLAKEKKQQMEQYRAEVYEQLELHSLLDAELMRRPFDLPLQPLARSGSPCHQKPMPSLPQLEERGTENQFAEPFLQEKPSSYSLTISPQHSAVDPLLPATDPHPKINAESLPYDERPLPAIRKHYGEAVVEPEMSNADISDARRGGMLGEPEPLTEKALREASSAIDVLGETLVAEAYCKTWSYREDALLALSKKLMEMPVGTPKEDLKNTLRASVFLVRRAIKDIVTSVFQASLKLLKMIITQYIPKHKLSKLETAHCVERTIPVLLTRTGDSSARLRVTAANFIQEMALFKEVKSLQIIPSYLVQPLKANSSVHLAMSQMGLLARLLKDLGTGSSGFTIDNVMKFSVSALEHRVYEVRETAVRIILDMYRQHQASILEYLPPDDSNTRRNILYKTIFEGFAKIDGRATDAEMRARRKAATEEAEKQKKEEIKALQGQLAALKEIQAEVQEKESDAVKPKNQDIQGGKAAPAEALGIPDEHYLDNLCIFCGERSESFTEEGLDLHYWKHCLMLTRCDHCKQVVEISSLTEHLLTECDKKDGFGKCYRCSEAVFKEELPRHIKHKDCNPAKPEKLANRCPLCHENFSPGEEAWKAHLMGPAGCTMNLRKTHILQKAPALQPGKSSAVAASGPLGSKAGSKIPTPKGGLSKSSSRTYAKR.

A coiled-coil region spans residues 209 to 289 (EVAQIIRKLD…RAEVYEQLEL (81 aa)). 2 HEAT repeats span residues 529–567 (TIPV…LQII) and 604–640 (GFTI…YRQH). The stretch at 677–725 (DAEMRARRKAATEEAEKQKKEEIKALQGQLAALKEIQAEVQEKESDAVK) forms a coiled coil. Residues 883-925 (PALQPGKSSAVAASGPLGSKAGSKIPTPKGGLSKSSSRTYAKR) are disordered. Polar residues predominate over residues 915 to 925 (SKSSSRTYAKR).

Interacts with CCP110 and CEP97. Interacts with ARMC9, TOGARAM1, CCDC66 and CSPP1.

It localises to the cell projection. The protein localises to the cilium. Its subcellular location is the cytoplasm. The protein resides in the cytoskeleton. It is found in the microtubule organizing center. It localises to the centrosome. The protein localises to the centriole. Its subcellular location is the spindle pole. Its function is as follows. Required for ciliogenesis and for structural integrity at the ciliary tip. This chain is Centrosomal protein of 104 kDa (CEP104), found in Homo sapiens (Human).